Here is a 192-residue protein sequence, read N- to C-terminus: Pterin-4-alpha-carbinolamine dehydratase (192 aa).

Belongs to the pterin-4-alpha-carbinolamine dehydratase family.

The enzyme catalyses (4aS,6R)-4a-hydroxy-L-erythro-5,6,7,8-tetrahydrobiopterin = (6R)-L-erythro-6,7-dihydrobiopterin + H2O. The polypeptide is Pterin-4-alpha-carbinolamine dehydratase (Pcd) (Drosophila melanogaster (Fruit fly)).